Consider the following 314-residue polypeptide: Solute carrier family 25 member 44 (314 aa).

Solcar repeat units lie at residues 18–100 (KKFY…TRKF), 107–210 (SNTV…YAEQ), and 220–302 (PHIV…LKKL). The next 6 membrane-spanning stretches (helical) occupy residues 20-42 (FYVFGVAMTMMIRVSVYPFTLIR), 71-90 (TGLYRGFLVNTFTLISGQCY), 113-133 (LVAGGSASLVAQSITVPIDVV), 185-201 (GYVASLLTYIPNSAVWW), 222-239 (IVFQAVSGPLAAATASIL), and 278-296 (LSARIISATPSTIVIVVGY).

Belongs to the mitochondrial carrier (TC 2.A.29) family.

The protein resides in the mitochondrion membrane. It carries out the reaction L-valine(in) = L-valine(out). The catalysed reaction is L-leucine(in) = L-leucine(out). In terms of biological role, mitochondrial solute transporter which transports branched-chain amino acid (BCAA; valine, leucine and isoleucine) into mitochondria in brown adipose tissue (BAT). BAT is involved in BCAA catabolism and actively utilizes BCAA in the mitochondria for thermogenesis. The chain is Solute carrier family 25 member 44 from Pongo abelii (Sumatran orangutan).